Consider the following 444-residue polypeptide: NADH-dependent flavin oxidoreductase nadA (444 aa).

FMN contacts are provided by residues Glu-37–Cys-40 and Gln-123. The segment at Pro-127–Thr-149 is disordered. His-192 to His-195 contributes to the substrate binding site. Position 345–346 (Ala-345–Arg-346) interacts with FMN.

This sequence belongs to the NADH:flavin oxidoreductase/NADH oxidase family.

It is found in the cytoplasm. The protein localises to the cytosol. NADH-dependent flavin oxidoreductase; part of the gene cluster that mediates the biosynthesis of aflatoxins, a group of polyketide-derived furanocoumarins, and part of the most toxic and carcinogenic compounds among the known mycotoxins. The four major aflatoxins produced by A.parasiticus are aflatoxin B1 (AFB1), aflatoxin B2 (AFB2), aflatoxin G1 (AFG1) and aflatoxin G2 (AFG2). Within the aflatoxin pathway, the NADH-dependent flavin oxidoreductase nadA is specifically required for the last steps in which OMST is converted specifically to aflatoxin G1. The biosynthesis of aflatoxins begins with the norsolorinic acid synthase aflC that combines a hexanoyl starter unit produced by the fatty acid synthase aflA/aflB and 7 malonyl-CoA extender units to synthesize the precursor NOR. The second step is the conversion of NOR to averantin and requires the norsolorinic acid ketoreductase aflD, which catalyzes the dehydration of norsolorinic acid to form (1'S)-averantin. The norsolorinic acid reductases aflE and aflF may also play a role in the conversion of NOR to AVN. The cytochrome P450 monooxygenase aflG then catalyzes the hydroxylation of AVN to 5'hydroxyaverantin (HAVN). The next step is performed by the 5'-hydroxyaverantin dehydrogenase aflH that transforms HAVN to 5'-oxoaverantin (OAVN) which is further converted to averufin (AVF) by aflK that plays a dual role in the pathway, as a 5'-oxoaverantin cyclase that mediates conversion of 5'-oxoaverantin, as well as a versicolorin B synthase in a later step in the pathway. The averufin oxidase aflI catalyzes the conversion of AVF to versiconal hemiacetal acetate (VHA). VHA is then the substrate for the versiconal hemiacetal acetate esterase aflJ to yield versiconal (VAL). Versicolorin B synthase aflK then converts VAL to versicolorin B (VERB) by closing the bisfuran ring of aflatoxin which is required for DNA-binding, thus giving to aflatoxin its activity as a mutagen. Then, the activity of the versicolorin B desaturase aflL leads to versicolorin A (VERA). A branch point starts from VERB since it can also be converted to dihydrodemethylsterigmatocystin (DMDHST), probably also by aflL, VERA being a precursor for aflatoxins B1 and G1, and DMDHST for aflatoxins B2 and G2. Next, the versicolorin reductase aflM and the cytochrome P450 monooxygenase aflN are involved in conversion of VERA to demethylsterigmatocystin (DMST). AflX and aflY seem also involved in this step, through probable aflX-mediated epoxide ring-opening step following versicolorin A oxidation and aflY-mediated Baeyer-Villiger oxidation required for the formation of the xanthone ring. The methyltransferase aflO then leads to the modification of DMST to sterigmatocystin (ST), and of DMDHST to dihydrosterigmatocystin (DHST). Both ST and DHST are then substrates of the O-methyltransferase aflP to yield O-methylsterigmatocystin (OMST) and dihydro-O-methylsterigmatocystin (DHOMST), respectively. Finally OMST is converted to aflatoxins B1 and G1, and DHOMST to aflatoxins B2 and G2, via the action of several enzymes including O-methylsterigmatocystin oxidoreductase aflQ, the cytochrome P450 monooxygenase aflU, but also the NADH-dependent flavin oxidoreductase nadA which is specifically required for the synthesis of AFG1. The chain is NADH-dependent flavin oxidoreductase nadA from Aspergillus parasiticus (strain ATCC 56775 / NRRL 5862 / SRRC 143 / SU-1).